The primary structure comprises 352 residues: Keratocan (352 aa).

The N-terminal stretch at 1–20 (MAGTICFIMWVLFITDTVWS) is a signal peptide. An LRRNT domain is found at 33 to 71 (DDWTIHDFECPMECFCPPSFPTALYCENRGLKEIPAIPS). Intrachain disulfides connect Cys-42–Cys-48 and Cys-46–Cys-58. LRR repeat units follow at residues 72 to 93 (RIWYLYLQNNLIETIPEKPFEN), 96 to 117 (QLRWINLNKNKITNYGIEKGAL), 122 to 142 (KLLFLFLEDNELEEVPSPLPR), 143 to 164 (SLEQLQLARNKVSRIPQGTFSN), 167 to 180 (NLTLLDLQNNKLVD), 193 to 213 (NLMQLNMAKNALRNMPPRLPA), 214 to 235 (NTMQLFLDNNSIEGIPENYFNV), 238 to 258 (KVAFLRLNHNKLSDEGLPSRG), 263 to 282 (SILDLQLSHNQLTKVPRISA), and 283 to 304 (HLQHLHLDHNKIKSVNVSVICP). An N-linked (GlcNAc...) (keratan sulfate) asparagine glycan is attached at Asn-93. A glycan (N-linked (GlcNAc...) (keratan sulfate) asparagine) is linked at Asn-167. Asn-222 carries N-linked (GlcNAc...) asparagine glycosylation. Asn-298 is a glycosylation site (N-linked (GlcNAc...) asparagine). A disulfide bridge links Cys-303 with Cys-343.

Belongs to the small leucine-rich proteoglycan (SLRP) family. SLRP class II subfamily. In terms of processing, binds keratan sulfate chains. As to expression, cornea (at protein level). Increased expression in the stroma of keratoconus corneas. Also detected in trachea, and in low levels, in intestine, skeletal muscle, ovary, lung and putamen.

The protein resides in the secreted. It localises to the extracellular space. It is found in the extracellular matrix. In terms of biological role, may be important in developing and maintaining corneal transparency and for the structure of the stromal matrix. The chain is Keratocan (KERA) from Homo sapiens (Human).